We begin with the raw amino-acid sequence, 315 residues long: Endolytic peptidoglycan transglycosylase RlpA (315 aa).

The N-terminal stretch at 1–19 is a signal peptide; that stretch reads MGLALEKVCFLGVIFLISA. A lipid anchor (N-palmitoyl cysteine) is attached at Cys-20. Residue Cys-20 is the site of S-diacylglycerol cysteine attachment. The span at 68 to 79 shows a compositional bias: basic and acidic residues; it reads SDSQDSNTKDQP. Positions 68–92 are disordered; it reads SDSQDSNTKDQPLDNGMRDSSSIQR. The 74-residue stretch at 242-315 folds into the SPOR domain; it reads SVSGGKFSLQ…YNQNAVLTRE (74 aa).

The protein belongs to the RlpA family.

Its subcellular location is the cell membrane. Functionally, lytic transglycosylase with a strong preference for naked glycan strands that lack stem peptides. This chain is Endolytic peptidoglycan transglycosylase RlpA, found in Helicobacter pylori (strain ATCC 700392 / 26695) (Campylobacter pylori).